The primary structure comprises 294 residues: tRNA dimethylallyltransferase (294 aa).

Position 10 to 17 (10 to 17 (GPTAVGKT)) interacts with ATP. 12–17 (TAVGKT) provides a ligand contact to substrate. The tract at residues 35–38 (DSQQ) is interaction with substrate tRNA.

The protein belongs to the IPP transferase family. In terms of assembly, monomer. Mg(2+) serves as cofactor.

It catalyses the reaction adenosine(37) in tRNA + dimethylallyl diphosphate = N(6)-dimethylallyladenosine(37) in tRNA + diphosphate. Functionally, catalyzes the transfer of a dimethylallyl group onto the adenine at position 37 in tRNAs that read codons beginning with uridine, leading to the formation of N6-(dimethylallyl)adenosine (i(6)A). The chain is tRNA dimethylallyltransferase from Streptococcus mutans serotype c (strain ATCC 700610 / UA159).